The primary structure comprises 168 residues: Envelope glycoprotein L (168 aa).

The first 22 residues, 1–22, serve as a signal peptide directing secretion; the sequence is MMWKWVTLLLFVLVCGDNPVNA. Positions 25–138 are interaction with gH; sequence HNPFVCCHQK…TDSSGFKNNL (114 aa).

Belongs to the herpesviridae glycoprotein L family. In terms of assembly, interacts with glycoprotein H (gH); this interaction is necessary for the correct processing and cell surface expression of gH. The heterodimer gH/gL seems to interact with gB trimers during fusion.

It localises to the virion membrane. It is found in the host cell membrane. Its subcellular location is the host Golgi apparatus. The protein localises to the host trans-Golgi network. The heterodimer glycoprotein H-glycoprotein L is required for the fusion of viral and plasma membranes leading to virus entry into the host cell. Acts as a functional inhibitor of gH and maintains gH in an inhibited form. Upon binding to host integrins, gL dissociates from gH leading to activation of the viral fusion glycoproteins gB and gH. In Connochaetes taurinus (Blue wildebeest), this protein is Envelope glycoprotein L.